We begin with the raw amino-acid sequence, 1026 residues long: Multidrug resistance protein MdtC (1026 aa).

The next 11 helical transmembrane spans lie at 16-36, 333-353, 360-380, 387-407, 435-455, 459-479, 528-548, 853-873, 897-917, 953-973, and 984-1004; these read LLAL…PVAP, EVEQ…FLFL, LIPA…IYLC, LSLM…IVVL, VFSI…MGGI, LFHE…LIAL, WVLL…ISIP, LLLI…LYES, LFNA…IGLV, PILM…FSYG, and ITIV…TPVV.

Belongs to the resistance-nodulation-cell division (RND) (TC 2.A.6) family. MdtC subfamily. Part of a tripartite efflux system composed of MdtA, MdtB and MdtC. MdtC forms a heteromultimer with MdtB.

Its subcellular location is the cell inner membrane. This Edwardsiella ictaluri (strain 93-146) protein is Multidrug resistance protein MdtC.